A 604-amino-acid polypeptide reads, in one-letter code: NADP-dependent malic enzyme, mitochondrial (604 aa).

The tract at residues 29–50 (APAQGCHSKPGPARPVPLKKRG) is disordered. Tyr-137 serves as the catalytic Proton donor. Arg-190 serves as a coordination point for NAD(+). Catalysis depends on Lys-208, which acts as the Proton acceptor. 3 residues coordinate a divalent metal cation: Glu-280, Asp-281, and Asp-304. An NAD(+)-binding site is contributed by Asp-304. Ser-371 carries the phosphoserine modification. Asn-443 lines the NAD(+) pocket.

It belongs to the malic enzymes family. The cofactor is Mg(2+). Mn(2+) is required as a cofactor. Expressed predominantly in organs with a low-division rate.

The protein localises to the mitochondrion matrix. The enzyme catalyses (S)-malate + NADP(+) = pyruvate + CO2 + NADPH. It catalyses the reaction oxaloacetate + H(+) = pyruvate + CO2. Catalyzes the oxidative decarboxylation of (S)-malate to pyruvate using NADP(+) as a cofactor. Can also reverse the decarboxylation reaction, but only with significantly lower efficiency. This is NADP-dependent malic enzyme, mitochondrial from Homo sapiens (Human).